A 678-amino-acid chain; its full sequence is Protein distal antenna (678 aa).

The 52-residue stretch at 7 to 58 (TKGKRPLRSLTPRDKIHAIQRIHDGESKASVARDIGVPESTLRGWCKNEDKL) folds into the HTH psq-type domain. A DNA-binding region (H-T-H motif) is located at residues 34-54 (KASVARDIGVPESTLRGWCKN). Disordered stretches follow at residues 232-310 (GAGN…GGPM), 344-381 (GVTS…PSGS), 445-528 (KETE…TSEC), 541-592 (GMEA…DEEE), and 645-678 (NETP…RRRK). 2 stretches are compositionally biased toward polar residues: residues 241-254 (PSGQ…SPRS) and 349-363 (PIRS…QLAQ). S251 and S254 each carry phosphoserine. The segment covering 372 to 381 (LTPSSTPSGS) has biased composition (low complexity). Polar residues predominate over residues 449–461 (TPSVRSLSSNEQN). Residues 462 to 478 (PEADEATETDLDGEVEP) show a composition bias toward acidic residues. The span at 495–508 (TPSQSPIAHSSGSR) shows a compositional bias: polar residues. Positions 570 to 586 (NNNDVSASNNNNNNNSN) are enriched in low complexity. Positions 657–667 (EDSEEHAAEEE) are enriched in acidic residues.

In terms of assembly, homomers. Interacts with itself, danr, ey and dac to form a complex (or complexes) containing the RD factors. As to expression, coexpressed with danr in the presumptive distal antenna, but not in the leg imaginal disk. Both proteins are also expressed in the brain and the eye region of the eye-antenna disk. First detected in early L3 eye disks in cells surrounding the newly initiated MF. Levels are uniform and high anterior to the furrow, lower levels within and posterior to the furrow. Limited expression is seen in small groups of cells in leg and wing. These appear in the location of prominent sense organ progenitors at relatively late stages of disk development.

Its subcellular location is the nucleus. In terms of biological role, probable transcription factor with a role in the retinal determination (RD) network. Regulates ato expression and is required for normal R8 induction and differentiation. Danr appears to repress Dan expression, but Dan is required for Danr expression anterior to the morphogenetic furrow (MF). Dan and Danr lie downstream of so and require dac function for highest levels of expression. Contributes to differentiation of antenna-specific characteristics; effector gene that acts downstream of homothorax (hth), Distal-less (Dll), cut (ct) and spineless (ss) genes to control differentiation of distal antennal structures. The protein is Protein distal antenna of Drosophila melanogaster (Fruit fly).